Consider the following 429-residue polypeptide: Guanine nucleotide-binding protein subunit alpha (429 aa).

Gly-2 carries N-myristoyl glycine lipidation. Residue Cys-3 is the site of S-palmitoyl cysteine attachment. Residues 40–429 enclose the G-alpha domain; the sequence is KGVKLLLLGA…QQNLKKSGIM (390 aa). The interval 43-56 is G1 motif; it reads KLLLLGAGESGKST. 6 residues coordinate GTP: Glu-51, Ser-52, Gly-53, Lys-54, Ser-55, and Thr-56. A Mg(2+)-binding site is contributed by Ser-55. The not present in other G-proteins stretch occupies residues 125–197; the sequence is LKQIDADVAG…KDSEQFTRLS (73 aa). The G2 motif stretch occupies residues 249-257; the sequence is DILKGRIKT. 7 residues coordinate GTP: Leu-251, Thr-257, Gly-279, Asn-345, Lys-346, Asp-348, and Ala-401. Mg(2+) is bound at residue Thr-257. The segment at 272–281 is G3 motif; that stretch reads FKVLDAGGQR. A G4 motif region spans residues 341 to 348; the sequence is ILFLNKID. The segment at 399–404 is G5 motif; the sequence is TCATDS.

It belongs to the G-alpha family. G(q) subfamily. As to quaternary structure, g proteins are composed of 3 units; alpha, beta and gamma. The alpha chain contains the guanine nucleotide binding site. Mg(2+) is required as a cofactor.

In terms of biological role, guanine nucleotide-binding proteins (G proteins) are involved as modulators or transducers in various transmembrane signaling systems. Involved in the mating pathway. The sequence is that of Guanine nucleotide-binding protein subunit alpha (CAG1) from Candida albicans (strain WO-1) (Yeast).